The following is a 324-amino-acid chain: Uric acid degradation bifunctional protein TTL (324 aa).

Ala-2 carries the N-acetylalanine modification. A required for BRI1-binding region spans residues 2–29 (AMEIGEDEWKVCCGSSEFAKQMSTSGPL). The tract at residues 2–161 (AMEIGEDEWK…LRMAKLFSDK (160 aa)) is OHCU decarboxylase. The active-site Proton donor; for OHCU decarboxylase activity is the His-58. The (S)-allantoin site is built by His-58, Pro-59, Glu-80, Phe-111, Ile-113, and Ala-115. The tract at residues 178–324 (KPQDRLRIIG…PFSFSTYRGS (147 aa)) is HIU hydrolase. Positions 182-190 (RLRIIGGHL) match the Internal peroxisomal targeting signal (PTS2) motif.

The protein in the N-terminal section; belongs to the OHCU decarboxylase family. In the C-terminal section; belongs to the transthyretin family. 5-hydroxyisourate hydrolase subfamily. In terms of assembly, homodimer. Forms tetramers. Interacts with BRI1 in a kinase-dependent manner. Interacts with B1L. Phosphorylated by BRI1 in vitro. As to expression, expressed ubiquitously with highest levels in flowers buds and elongating inflorescences. Mainly expressed in stems and leaves, and, to a lower extent, in flowers, flower buds and seedlings. In terms of tissue distribution, strongly expressed in flower buds and leaves, to a lower extent in stems, and at low levels in seedlings and flowers.

The protein localises to the cell membrane. Its subcellular location is the peroxisome. The protein resides in the cytoplasm. It is found in the cytosol. It carries out the reaction 5-hydroxyisourate + H2O = 5-hydroxy-2-oxo-4-ureido-2,5-dihydro-1H-imidazole-5-carboxylate + H(+). It catalyses the reaction 5-hydroxy-2-oxo-4-ureido-2,5-dihydro-1H-imidazole-5-carboxylate + H(+) = (S)-allantoin + CO2. It functions in the pathway purine metabolism; urate degradation; (S)-allantoin from urate: step 2/3. It participates in purine metabolism; urate degradation; (S)-allantoin from urate: step 3/3. In terms of biological role, involved in the last two steps of the degradation of uric acid, i.e. the hydrolysis of 5-hydroxyisourate (HIU) to 2-oxo-4-hydroxy-4-carboxy-5-ureidoimidazoline (OHCU) and its stereoselective decarboxylation to (S)-allantoin, a major ureide compound. Might function as a negative regulator to modulate brassinosteroid-mediated plant growth. Together with B1L, prevents plant growth and development, but by opposition to B1L, negatively regulates cold tolerance, probably in a brassinosteroid (BR) and allantoin-dependent manner. The sequence is that of Uric acid degradation bifunctional protein TTL from Arabidopsis thaliana (Mouse-ear cress).